The chain runs to 890 residues: MQTHEINQRFTEHFRKAGHTVVPSASLILDDPTLLFVNAGMVQFKPYFLGDAPAPYPRATSIQKCVRTGDIDEVGKTTRHNTFFQMAGNFSFGDYFKEGAMEHAWGLLTSSQADGGYGFDPERLWVTVFEKDEEAAALWQKVTGIPAERIQVRDAKDNYWDMGVPGPGGPCSEIYYDRGPKYGREGGPVVDEDRYIEIWNLVFMQDIRGELPPKEGHPPIGELPTKNIDTGMGVERVACLLQGVENVYETDLVRPVIAKAEELSGRSYGANHEDDVRFRVIADHARSGVMLVGDGVTPGNEARGYVLRRLLRRIIRSTRLLGVHEPVLGEFAAVVRDAMAPSYPELVTEFDRIDSVMRNEEDAFLSTLTAGSKIFDLAVADTKKAGGTQLAGAKAFQLHDTYGFPIDLTLEMASEQGLSVDEHGFRELMSEQRRRAKEDAKSRKSGHGDLSTYRTLLDQHGTTEFLGYTDLQAQSRVLGLLVDGVPAKSAAAGTEVELILDRTPFYAEGGGQIADTGRLTGPGVEVEVHDVQRAVPGLFVHRAKVTAGELGVDTSLEAAVDSKRRHAIERSHSATHLVHAAVRSAYGKRAAQAGSLNSPGRMRFDFTAPAAVSGAVLGGVEEEVNSYLQNDVEVQSYTTTMDRAMELGAVALFGEKYGDQVRVVDMGDYSRELCGGTHVGRIGQLGVVKLVADSSVGSGVHRVEALVGMDAMRHISKEHLLVSRLAEQFKVPAEELPERIAGVVSRLRSAEKELEQLRVAQVLQSAGELAGKGTDVHGVTLVAEQVPDGVDGGALRALAGEVRGRLGSRPAVVALFSADGDKVSFVVGVNTPAQDLGLKAGKLVPSFAAEVGGRGGGKPDMAQGGGSNPAGITAAIAALRTGLDQAVARG.

Residues His572, His576, Cys674, and His678 each contribute to the Zn(2+) site.

The protein belongs to the class-II aminoacyl-tRNA synthetase family. It depends on Zn(2+) as a cofactor.

It localises to the cytoplasm. It carries out the reaction tRNA(Ala) + L-alanine + ATP = L-alanyl-tRNA(Ala) + AMP + diphosphate. Functionally, catalyzes the attachment of alanine to tRNA(Ala) in a two-step reaction: alanine is first activated by ATP to form Ala-AMP and then transferred to the acceptor end of tRNA(Ala). Also edits incorrectly charged Ser-tRNA(Ala) and Gly-tRNA(Ala) via its editing domain. This is Alanine--tRNA ligase from Saccharopolyspora erythraea (strain ATCC 11635 / DSM 40517 / JCM 4748 / NBRC 13426 / NCIMB 8594 / NRRL 2338).